The primary structure comprises 500 residues: L-arabinose isomerase (500 aa).

Residues E306, E333, H350, and H450 each contribute to the Mn(2+) site.

The protein belongs to the arabinose isomerase family. As to quaternary structure, homohexamer. Mn(2+) is required as a cofactor.

It carries out the reaction beta-L-arabinopyranose = L-ribulose. Its pathway is carbohydrate degradation; L-arabinose degradation via L-ribulose; D-xylulose 5-phosphate from L-arabinose (bacterial route): step 1/3. In terms of biological role, catalyzes the conversion of L-arabinose to L-ribulose. In Klebsiella pneumoniae (strain 342), this protein is L-arabinose isomerase.